A 1009-amino-acid polypeptide reads, in one-letter code: Lateral signaling target protein 2 homolog (1009 aa).

Disordered stretches follow at residues 313-460 (PVGS…EEQL), 497-629 (ASED…KRCS), and 777-905 (MQRN…TATA). 3 stretches are compositionally biased toward low complexity: residues 327–348 (SSTP…SSSG), 364–398 (QRNN…TPTA), and 406–427 (PSHS…HPPA). The span at 430 to 458 (SDGDDEDEDEEEDEEEDELEDTEDDTDEE) shows a compositional bias: acidic residues. S541 is subject to Phosphoserine. A compositionally biased stretch (basic and acidic residues) spans 544-558 (SEPHRDQGETIKSTE). The span at 562 to 575 (QQQQQQEQQTLQSS) shows a compositional bias: low complexity. 2 stretches are compositionally biased toward basic residues: residues 576-601 (RQRH…HHST) and 609-627 (QPHH…GRKR). A compositionally biased stretch (low complexity) spans 780–798 (NNTIDNPSSSNTSSSSATT). S807 carries the post-translational modification Phosphoserine. Residues 822–878 (VHQQEQEMQQQQDHQQQQHQHQVQVQLQRQRNNSVGSNTPSSASSTSSSSEQNSPVS) are compositionally biased toward low complexity. The FYVE-type zinc-finger motif lies at 917–977 (DGKAPRCMSC…VCRDCYVREV (61 aa)). Residues C923, C926, C939, C942, C947, C950, C969, and C972 each contribute to the Zn(2+) site.

The protein belongs to the lst-2 family.

Negative regulator of epidermal growth factor receptor (EGFR) signaling. The protein is Lateral signaling target protein 2 homolog of Drosophila persimilis (Fruit fly).